Consider the following 298-residue polypeptide: KH domain-containing protein At1g09660/At1g09670 (298 aa).

Residues 152 to 219 enclose the KH domain; the sequence is DVPVDKYPSY…EHLCEPLHVL (68 aa). Residues 266-298 form a disordered region; the sequence is NGTLREESPSPSLSPCLSPSMSPFNSKRAKTEI. 2 positions are modified to phosphoserine: Ser273 and Ser287. Low complexity predominate over residues 274 to 288; that stretch reads PSPSLSPCLSPSMSP.

It localises to the nucleus. In Arabidopsis thaliana (Mouse-ear cress), this protein is KH domain-containing protein At1g09660/At1g09670.